A 464-amino-acid chain; its full sequence is Glutamate--tRNA ligase 2 (464 aa).

A 'HIGH' region motif is present at residues 11–21 (PSPTGFLHIGS). The short motif at 240–244 (KLSKR) is the 'KMSKS' region element. K243 contributes to the ATP binding site.

This sequence belongs to the class-I aminoacyl-tRNA synthetase family. Glutamate--tRNA ligase type 1 subfamily. As to quaternary structure, monomer.

It localises to the cytoplasm. The catalysed reaction is tRNA(Glu) + L-glutamate + ATP = L-glutamyl-tRNA(Glu) + AMP + diphosphate. Functionally, catalyzes the attachment of glutamate to tRNA(Glu) in a two-step reaction: glutamate is first activated by ATP to form Glu-AMP and then transferred to the acceptor end of tRNA(Glu). The polypeptide is Glutamate--tRNA ligase 2 (Rickettsia bellii (strain OSU 85-389)).